The following is a 208-amino-acid chain: Na(+)-translocating NADH-quinone reductase subunit D (208 aa).

The next 5 membrane-spanning stretches (helical) occupy residues 42–62 (IVMGISVALVTGFSSFFISLV), 72–92 (IIVQMAIIASLVTLVDQLLQA), 103–123 (VFVGLIITNCIVMGRAEAFAM), 131–151 (LIDGIGNGAGYGMMLLVVATV), and 178–198 (NGLFLLAPSAFFIIGFLIWGL).

The protein belongs to the NqrDE/RnfAE family. In terms of assembly, composed of six subunits; NqrA, NqrB, NqrC, NqrD, NqrE and NqrF.

Its subcellular location is the cell inner membrane. The catalysed reaction is a ubiquinone + n Na(+)(in) + NADH + H(+) = a ubiquinol + n Na(+)(out) + NAD(+). Functionally, NQR complex catalyzes the reduction of ubiquinone-1 to ubiquinol by two successive reactions, coupled with the transport of Na(+) ions from the cytoplasm to the periplasm. NqrA to NqrE are probably involved in the second step, the conversion of ubisemiquinone to ubiquinol. The sequence is that of Na(+)-translocating NADH-quinone reductase subunit D from Neisseria gonorrhoeae (strain ATCC 700825 / FA 1090).